The chain runs to 934 residues: Pesticidal crystal protein Cry1Aa (934 aa).

This sequence belongs to the delta endotoxin family.

Functionally, promotes colloidosmotic lysis by binding to the midgut epithelial cells of many lepidopteran larvae. This is Pesticidal crystal protein Cry1Aa (cry1Aa) from Bacillus thuringiensis subsp. sotto.